Here is a 152-residue protein sequence, read N- to C-terminus: Natriuretic peptides A (152 aa).

The N-terminal stretch at 1–24 (MGSFSITKGFFLFLAFWLPGHIGA) is a signal peptide. Propeptides lie at residues 25-122 (NPVY…AGPR) and 92-102 (DGGALGRGPWD). The interval 54-104 (DEVMPPQALSEQTDEAGAALSSLSEVPPWTGEVNPSQRDGGALGRGPWDPS) is disordered. Position 128 is a phosphoserine (Ser128). Cysteines 129 and 145 form a disulfide. Positions 146 to 150 (NSFRY) are important for degradation of atrial natriuretic peptide by IDE.

It belongs to the natriuretic peptide family. As to quaternary structure, homodimer; disulfide-linked antiparallel dimer. In terms of processing, the precursor molecule is proteolytically cleaved by CORIN at Arg-122 to produce the atrial natriuretic peptide. Undergoes further proteolytic cleavage by unknown proteases to give rise to long-acting natriuretic peptide, vessel dilator and kaliuretic peptide. Additional processing gives rise to the auriculin and atriopeptin peptides. In the kidneys, alternative processing by an unknown protease results in the peptide urodilatin. Cleavage by MME initiates degradation of the factor and thereby regulates its activity. Degradation by IDE results in reduced activation of NPR1 (in vitro). During IDE degradation, the resulting products can temporarily stimulate NPR2 to produce cGMP, before the fragments are completely degraded and inactivated by IDE (in vitro). Post-translationally, degraded by IDE. In terms of processing, phosphorylation on Ser-128 decreases vasorelaxant activity. In terms of tissue distribution, high levels of expression in the atria compared to the ventricles. Very low levels of expression detected in extracardiac tissues such as the brain, hypothalamus, pituitary, lung and aorta. Atria (at protein level). As to expression, high levels of expression in the atria with very low levels of expression in the ventricles (at protein level). Relatively low levels of expression detected in the brain compared to the atria (at protein level).

It localises to the secreted. Its subcellular location is the perikaryon. The protein resides in the cell projection. Functionally, hormone that plays a key role in mediating cardio-renal homeostasis, and is involved in vascular remodeling and regulating energy metabolism. Acts by specifically binding and stimulating NPR1 to produce cGMP, which in turn activates effector proteins, such as PRKG1, that drive various biological responses. Regulates vasodilation, natriuresis, diuresis and aldosterone synthesis and is therefore essential for regulating blood pressure, controlling the extracellular fluid volume and maintaining the fluid-electrolyte balance. Also involved in inhibiting cardiac remodeling and cardiac hypertrophy by inducing cardiomyocyte apoptosis and attenuating the growth of cardiomyocytes and fibroblasts. Plays a role in female pregnancy by promoting trophoblast invasion and spiral artery remodeling in uterus, and thus prevents pregnancy-induced hypertension. In adipose tissue, acts in various cGMP- and PKG-dependent pathways to regulate lipid metabolism and energy homeostasis. This includes up-regulating lipid metabolism and mitochondrial oxygen utilization by activating the AMP-activated protein kinase (AMPK), and increasing energy expenditure by acting via MAPK11 to promote the UCP1-dependent thermogenesis of brown adipose tissue. Binds the clearance receptor NPR3 which removes the hormone from circulation. Its function is as follows. May have a role in cardio-renal homeostasis through regulation of natriuresis, diuresis, vasodilation, and inhibiting aldosterone synthesis. In vitro, promotes the production of cGMP and induces vasodilation. May promote natriuresis, at least in part, by enhancing prostaglandin E2 synthesis resulting in the inhibition of renal Na+-K+-ATPase. However reports on the involvement of this peptide in mammal blood volume and blood pressure homeostasis are conflicting; according to a report, in vivo it is not sufficient to activate cGMP and does not inhibit collecting duct transport nor effect diuresis and natriuresis. Appears to bind to specific receptors that are distinct from the receptors bound by atrial natriuretic peptide and vessel dilator. Possibly enhances protein excretion in urine by decreasing proximal tubular protein reabsorption. In terms of biological role, may have a role in cardio-renal homeostasis through regulation of natriuresis, diuresis, and vasodilation. In vitro, promotes the production of cGMP and induces vasodilation. May promote natriuresis, at least in part, by enhancing prostaglandin E2 synthesis resulting in the inhibition of renal Na+-K+-ATPase. However reports on the involvement of this peptide in mammal blood volume and blood pressure homeostasis are conflicting; according to a report, in vivo it is not sufficient to activate cGMP and does not inhibit collecting duct transport nor effect diuresis and natriuresis. Appears to bind to specific receptors that are distinct from the receptors bound by the atrial natriuretic and long-acting natriuretic peptides. Possibly functions in protein excretion in urine by maintaining the integrity of the proximal tubules and enhancing protein excretion by decreasing proximal tubular protein reabsorption. May have a role in cardio-renal homeostasis through regulation of diuresis and inhibiting aldosterone synthesis. In vitro, promotes the production of cGMP and induces vasodilation. May promote natriuresis, at least in part, by enhancing prostaglandin E2 synthesis resulting in the inhibition of renal Na+-K+-ATPase. May have a role in potassium excretion but not sodium excretion (natriuresis). Possibly enhances protein excretion in urine by decreasing proximal tubular protein reabsorption. Functionally, hormone produced in the kidneys that appears to be important for maintaining cardio-renal homeostasis. Mediates vasodilation, natriuresis and diuresis primarily in the renal system, in order to maintain the extracellular fluid volume and control the fluid-electrolyte balance. Specifically binds and stimulates cGMP production by renal transmembrane receptors, likely NPR1. Urodilatin not ANP, may be the natriuretic peptide responsible for the regulation of sodium and water homeostasis in the kidney. Its function is as follows. May have a role in cardio-renal homeostasis through regulation of natriuresis and vasodilation. In vivo promotes natriuresis and in vitro, vasodilates renal artery strips. In terms of biological role, may have a role in cardio-renal homeostasis through regulation of regulation of natriuresis and vasodilation. In vivo promotes natriuresis. In vitro, vasodilates intestinal smooth muscle but not smooth muscle strips. May have a role in cardio-renal homeostasis through regulation of natriuresis and vasodilation. In vivo promotes natriuresis. In vitro, selectively vasodilates intestinal and vascular smooth muscle strips. Functionally, may have a role in cardio-renal homeostasis through regulation of natriuresis and vasodilation. In vivo promotes natriuresis. In vitro, selectively vasodilates intestinal smooth muscle but not vascular smooth muscle strips. The sequence is that of Natriuretic peptides A (Nppa) from Rattus norvegicus (Rat).